Here is an 86-residue protein sequence, read N- to C-terminus: Large ribosomal subunit protein bL27 (86 aa).

A disordered region spans residues 1 to 26 (MATKKAGGSSRNGRDSAGRRLGVKKS).

Belongs to the bacterial ribosomal protein bL27 family.

The chain is Large ribosomal subunit protein bL27 from Rickettsia akari (strain Hartford).